Here is a 219-residue protein sequence, read N- to C-terminus: Transmembrane emp24 domain-containing protein 10 (219 aa).

The signal sequence occupies residues 1–31 (MSGSSGPQAQRGPCPFALLLLLLLGPSSVLA). Residues 1-142 (MSGSSGPQAQ…KNYEEIAKVE (142 aa)) are required for interaction with STX17. Residues 32 to 185 (ISFHLPVNSR…RDTNESTNTR (154 aa)) are Lumenal-facing. In terms of domain architecture, GOLD spans 41-193 (RKCLREEIHK…TRVLYFSIFS (153 aa)). A required for TMED10 and TMED2 cis-Golgi network localization region spans residues 147-178 (LEVELRRLEDLSESIVNDFAYMKKREEEMRDT). Dimethylated arginine is present on residues Arg-171 and Arg-176. A glycan (N-linked (GlcNAc...) asparagine) is linked at Asn-179. Residues 186 to 206 (VLYFSIFSMFCLIGLATWQVF) traverse the membrane as a helical segment. An interaction with COPG1 region spans residues 204–219 (QVFYLRRFFKAKKLIE). Topologically, residues 207-219 (YLRRFFKAKKLIE) are cytoplasmic. The tract at residues 207–219 (YLRRFFKAKKLIE) is interaction with ARF1 and IL1B. A COPII vesicle coat-binding motif is present at residues 211-212 (FF). The COPI vesicle coat-binding signature appears at 211 to 219 (FFKAKKLIE).

It belongs to the EMP24/GP25L family. In terms of assembly, predominantly dimeric and to a lesser extent monomeric in the ER. Monomer and dimer in ERGIC and cis-Golgi network. Forms homooligomer (via GOLD domain); the assembly is promoted by direct binding with leaderless cargos and may form a protein channel that facilitates cargo entry into the ERGIC. Forms heterooligomeric complexes with other members of the p24 family such as TMED2, TMED7 and TMED9. Interacts (via GOLD domain) with TMED2 (via GOLD domain); the complex is required for export of TMED10 from the ER to the cis-Golgi network; the complex is proposed to be involved in cis-Golgi network dynamics and / or biogenesis. Associates with the COPI vesicle coat subunits (coatomer). Tetramerization of the cytoplasmic domain at the Golgi membrane in vitro; the complex is proposed to interact with COPI coatomer and induce budding of the vesicles. Interacts with COPG1; the interaction involves TMED10 homodimer. Interacts with ARF1 (GDP-bound); the interaction probably involves a TMED10 oligomer. Interacts with SEC23A, SEC24B, SEC24C and SEC24D components of the coat protein complex II/COPII, indicative of an association of TMED10 with the COPII vesicle coat. Interacts with CD59. Interacts with MPPE1/PGAP5; the complex might recruit and sort GPI-anchored proteins to the ER-exit site, or the interaction might lead to recycling of PGAP5 between the ER and the Golgi. Interacts with F2LR1/PAR2. Interacts with KDELR2/ERD2; the interaction is disrupted by KDELR2 ligand. Found in a complex composed at least of SURF4, TMED2 and TMED10. Associates with the presenilin-dependent gamma-secretase complex. Interacts with STX17; the interaction is direct. Interacts with IL-1; the interaction is direct. Interacts with RAB21 (active GTP-bound form); the interaction is indirect and regulates TMED10 abundance and localization at the Golgi.

It localises to the endoplasmic reticulum membrane. The protein resides in the endoplasmic reticulum-Golgi intermediate compartment membrane. It is found in the golgi apparatus membrane. The protein localises to the golgi apparatus. Its subcellular location is the cis-Golgi network membrane. It localises to the trans-Golgi network membrane. The protein resides in the cytoplasmic vesicle. It is found in the secretory vesicle membrane. The protein localises to the cell membrane. Its subcellular location is the melanosome. Its function is as follows. Cargo receptor involved in protein vesicular trafficking and quality control in the endoplasmic reticulum (ER) and Golgi. The p24 protein family is a group of transmembrane proteins that bind coat protein complex I/COPI and coat protein complex II/COPII involved in vesicular trafficking between the membranes. Acts at the lumenal side for incorporation of secretory cargo molecules into transport vesicles and involved in vesicle coat formation at the cytoplasmic side. Mainly functions in the early secretory pathway and cycles between the ER, ER-Golgi intermediate compartment (ERGIC) and Golgi, mediating cargo transport through COPI and COPII-coated vesicles. In COPII vesicle-mediated anterograde transport, involved in the transport of GPI-anchored proteins by acting together with TMED2 as their cargo receptor; the function specifically implies SEC24C and SEC24D of the COPII vesicle coat and lipid raft-like microdomains of the ER. Recognizes GPI anchors structural remodeled in the ER by the GPI inositol-deacylase/PGAP1 and the metallophosphoesterase MPPE1/PGAP5. In COPI vesicle-mediated retrograde transport, involved in the biogenesis of COPI vesicles and vesicle coat recruitment. Involved in trafficking of amyloid beta A4 protein and soluble APP-beta release (independent from the modulation of gamma-secretase activity). Involved in the KDELR2-mediated retrograde transport of the toxin A subunit (CTX-A-K63)together with COPI and the COOH terminus of KDELR2. On Golgi membranes, acts as a primary receptor for ARF1-GDP, a GTP-binding protein involved in COPI-vesicle formation. Increases coatomer-dependent GTPase-activating activity of ARFGAP2 which mediates the hydrolysis of ARF1-bound GTP and therefore modulates protein trafficking from the Golgi apparatus. Involved in the exocytic trafficking of G protein-coupled receptors F2LR1/PAR2 (trypsin and tryspin-like enzyme receptor), OPRM1 (opioid receptor) and P2RY4 (UTD and UDP receptor) from the Golgi to the plasma membrane, thus contributing to receptor resensitization. In addition to its cargo receptor activity, may also act as a protein channel after oligomerization, facilitating the post-translational entry of leaderless cytoplasmic cargo into the ERGIC. Involved in the translocation into ERGIC, the vesicle entry and the secretion of leaderless cargos (lacking the secretion signal sequence), including the mature form of interleukin 1/IL-1 family members, the alpha-crystallin B chain HSPB5, the carbohydrate-binding proteins galectin-1/LGALS1 and galectin-3/LGALS3, the microtubule-associated protein Tau/MAPT, and the annexin A1/ANXA1; the translocation process is dependent on cargo protein unfolding and enhanced by chaperones HSP90AB1 and HSP90B1/GRP9. Could also associates with the presenilin-dependent gamma-secretase complex in order to regulate gamma-cleavages of the amyloid beta A4 protein to yield amyloid-beta 40/Abeta40. The protein is Transmembrane emp24 domain-containing protein 10 (TMED10) of Bos taurus (Bovine).